The following is an 810-amino-acid chain: DNA gyrase subunit A (810 aa).

The Topo IIA-type catalytic domain occupies 36–502 (LPDVRDGLKP…EVLKTSMSDL (467 aa)). Catalysis depends on Tyr124, which acts as the O-(5'-phospho-DNA)-tyrosine intermediate. Residues 499-810 (MSDLMQKENI…SLVSVSKFIK (312 aa)) are C-terminal domain. Residues 529–535 (QGTGGKG) carry the GyrA-box motif.

The protein belongs to the type II topoisomerase GyrA/ParC subunit family. As to quaternary structure, heterotetramer, composed of two GyrA and two GyrB chains. In the heterotetramer, GyrA contains the active site tyrosine that forms a transient covalent intermediate with DNA, while GyrB binds cofactors and catalyzes ATP hydrolysis.

The protein localises to the cytoplasm. The enzyme catalyses ATP-dependent breakage, passage and rejoining of double-stranded DNA.. A type II topoisomerase that negatively supercoils closed circular double-stranded (ds) DNA in an ATP-dependent manner to modulate DNA topology and maintain chromosomes in an underwound state. Negative supercoiling favors strand separation, and DNA replication, transcription, recombination and repair, all of which involve strand separation. Also able to catalyze the interconversion of other topological isomers of dsDNA rings, including catenanes and knotted rings. Type II topoisomerases break and join 2 DNA strands simultaneously in an ATP-dependent manner. In Borreliella burgdorferi (strain ATCC 35210 / DSM 4680 / CIP 102532 / B31) (Borrelia burgdorferi), this protein is DNA gyrase subunit A.